The sequence spans 253 residues: DNA polymerase sliding clamp 2 (253 aa).

Belongs to the PCNA family. Homotrimer. The subunits circularize to form a toroid; DNA passes through its center. Replication factor C (RFC) is required to load the toroid on the DNA. Interacts with TIP.

Its activity is regulated as follows. Inhibited by interaction with the PCNA inhibitor TIP. Functionally, sliding clamp subunit that acts as a moving platform for DNA processing. Responsible for tethering the catalytic subunit of DNA polymerase and other proteins to DNA during high-speed replication. The sequence is that of DNA polymerase sliding clamp 2 from Thermococcus kodakarensis (strain ATCC BAA-918 / JCM 12380 / KOD1) (Pyrococcus kodakaraensis (strain KOD1)).